We begin with the raw amino-acid sequence, 265 residues long: Protein HesA, vegetative (265 aa).

The protein belongs to the HesA/MoeB/ThiF family.

The protein is Protein HesA, vegetative (hesA2) of Trichormus variabilis (strain ATCC 29413 / PCC 7937) (Anabaena variabilis).